The primary structure comprises 196 residues: Peroxiredoxin TSA2 (196 aa).

In terms of domain architecture, Thioredoxin spans 3–161 (AEVQKQAPPF…ALRLVEGFQW (159 aa)). K14 is covalently cross-linked (Glycyl lysine isopeptide (Lys-Gly) (interchain with G-Cter in ubiquitin)). C48 (cysteine sulfenic acid (-SOH) intermediate) is an active-site residue. Glycyl lysine isopeptide (Lys-Gly) (interchain with G-Cter in ubiquitin) cross-links involve residues K89 and K132. T174 is modified (phosphothreonine).

This sequence belongs to the peroxiredoxin family. AhpC/Prx1 subfamily. Homodimer; disulfide-linked, upon oxidation.

It is found in the cytoplasm. The catalysed reaction is a hydroperoxide + [thioredoxin]-dithiol = an alcohol + [thioredoxin]-disulfide + H2O. In terms of biological role, thiol-specific peroxidase that catalyzes the reduction of hydrogen peroxide and organic hydroperoxides to water and alcohols, respectively. Plays a role in cell protection against oxidative stress by detoxifying peroxides and as sensor of hydrogen peroxide-mediated signaling events. Can act alternatively as peroxidase and molecular chaperone. Oxidative stress and heat shock exposure cause a reversible shift of the protein structure from low MW species to high MW complexes, triggering a peroxidase-to-chaperone functional switch. The chaperone function of the protein enhances resistance to heat shock. This is Peroxiredoxin TSA2 from Saccharomyces cerevisiae (strain ATCC 204508 / S288c) (Baker's yeast).